We begin with the raw amino-acid sequence, 309 residues long: Tagatose-6-phosphate kinase (309 aa).

This sequence belongs to the carbohydrate kinase PfkB family. LacC subfamily.

It catalyses the reaction D-tagatofuranose 6-phosphate + ATP = D-tagatofuranose 1,6-bisphosphate + ADP + H(+). Its pathway is carbohydrate metabolism; D-tagatose 6-phosphate degradation; D-glyceraldehyde 3-phosphate and glycerone phosphate from D-tagatose 6-phosphate: step 1/2. This Streptococcus pneumoniae (strain P1031) protein is Tagatose-6-phosphate kinase.